The primary structure comprises 278 residues: Cation-dependent mannose-6-phosphate receptor (278 aa).

The N-terminal stretch at 1-21 is a signal peptide; that stretch reads MFPLSGCWRTELLLLLLLAVA. At 22–188 the chain is on the lumenal side; that stretch reads VRESWQIEEK…ACSPEVSHLS (167 aa). The 152-residue stretch at 31 to 182 folds into the MRH domain; it reads KSCDLVGEKD…EMDSSLACSP (152 aa). Residues C33 and C79 are joined by a disulfide bond. Residues N58, N84, N95, N108, and N114 are each glycosylated (N-linked (GlcNAc...) asparagine). 2 cysteine pairs are disulfide-bonded: C133/C168 and C146/C180. A helical transmembrane segment spans residues 189–209; sequence VGSILLVIFASLVAVYIIGGF. Topologically, residues 210 to 278 are cytoplasmic; the sequence is LYQRLVVGAK…EERDDHLLPM (69 aa). Positions 256-278 are disordered; it reads YRGVGDDQLGEESEERDDHLLPM. S268 is modified (phosphoserine).

Homodimer. Binds GGA1, GGA2 and GGA3.

The protein localises to the lysosome membrane. Its function is as follows. Transport of phosphorylated lysosomal enzymes from the Golgi complex and the cell surface to lysosomes. Lysosomal enzymes bearing phosphomannosyl residues bind specifically to mannose-6-phosphate receptors in the Golgi apparatus and the resulting receptor-ligand complex is transported to an acidic prelyosomal compartment where the low pH mediates the dissociation of the complex. This chain is Cation-dependent mannose-6-phosphate receptor (M6pr), found in Rattus norvegicus (Rat).